The sequence spans 84 residues: Venom protein SynTx (84 aa).

The N-terminal stretch at 1-19 is a signal peptide; that stretch reads TLLLTLVVVTIVCLDLGYT. Intrachain disulfides connect C22–C43, C36–C61, C65–C76, and C77–C82.

It belongs to the three-finger toxin family. Short-chain subfamily. Aminergic toxin sub-subfamily. Homodimer; disulfide-linked. Expressed by the venom gland.

It is found in the secreted. This protein shows a synergetic toxic effect in that it enhances the toxicity of other toxins. This is Venom protein SynTx from Dendroaspis jamesoni jamesoni (Jameson's mamba).